Here is a 61-residue protein sequence, read N- to C-terminus: ATP synthase F(0) complex subunit 8 (61 aa).

A helical transmembrane segment spans residues 10–32 (FMILSSTWLIYTIILQPKILSHL).

Belongs to the ATPase protein 8 family. In terms of assembly, component of the ATP synthase complex composed at least of ATP5F1A/subunit alpha, ATP5F1B/subunit beta, ATP5MC1/subunit c (homooctomer), MT-ATP6/subunit a, MT-ATP8/subunit 8, ATP5ME/subunit e, ATP5MF/subunit f, ATP5MG/subunit g, ATP5MK/subunit k, ATP5MJ/subunit j, ATP5F1C/subunit gamma, ATP5F1D/subunit delta, ATP5F1E/subunit epsilon, ATP5PF/subunit F6, ATP5PB/subunit b, ATP5PD/subunit d, ATP5PO/subunit OSCP. ATP synthase complex consists of a soluble F(1) head domain (subunits alpha(3) and beta(3)) - the catalytic core - and a membrane F(0) domain - the membrane proton channel (subunits c, a, 8, e, f, g, k and j). These two domains are linked by a central stalk (subunits gamma, delta, and epsilon) rotating inside the F1 region and a stationary peripheral stalk (subunits F6, b, d, and OSCP).

It is found in the mitochondrion membrane. Subunit 8, of the mitochondrial membrane ATP synthase complex (F(1)F(0) ATP synthase or Complex V) that produces ATP from ADP in the presence of a proton gradient across the membrane which is generated by electron transport complexes of the respiratory chain. ATP synthase complex consist of a soluble F(1) head domain - the catalytic core - and a membrane F(1) domain - the membrane proton channel. These two domains are linked by a central stalk rotating inside the F(1) region and a stationary peripheral stalk. During catalysis, ATP synthesis in the catalytic domain of F(1) is coupled via a rotary mechanism of the central stalk subunits to proton translocation. In vivo, can only synthesize ATP although its ATP hydrolase activity can be activated artificially in vitro. Part of the complex F(0) domain. In Chelonia mydas (Green sea-turtle), this protein is ATP synthase F(0) complex subunit 8.